A 101-amino-acid chain; its full sequence is MAKLSSINKNEKRKKMAKAYAGKYSRLKAAANDKSLDETDRLVARLKMAELPRNANPTRVRNRCALTGRPRGYYRKFQLCRIQLRDLANKGLIPGVTKSSW.

This sequence belongs to the universal ribosomal protein uS14 family. Part of the 30S ribosomal subunit. Contacts proteins S3 and S10.

Its function is as follows. Binds 16S rRNA, required for the assembly of 30S particles and may also be responsible for determining the conformation of the 16S rRNA at the A site. In Zymomonas mobilis subsp. mobilis (strain ATCC 31821 / ZM4 / CP4), this protein is Small ribosomal subunit protein uS14.